Consider the following 305-residue polypeptide: MIYSHLSSTSCTITTGCKVNLNLYITGILPNGWHKIDSIFLPLSEPHDELHIEITNHNQGLHLSCNILDIELENNILTKTYTLFTKATHFTPSISIYLKKGIPYGAGLGGGSSDAAALLTWLQKNSPLPLSPSKLLKLAAEIGADVPFFLKNKPCRATGIGEKLEEISLSNLNISGNTLFIICPNLKISTPYAYKMWDDYNKKQIATSSRYNNNLTKKYSWDRSSPSTHLSDYLWMKNDFEPVIFSEYTELSVFKEQLLQFGARAAVLSGSGSSIYGLFKEYNQTSIMTEFYKKKNILTFSQLLQ.

Residue Lys-18 is part of the active site. Residue 103–113 participates in ATP binding; that stretch reads PYGAGLGGGSS. Asp-145 is an active-site residue.

It belongs to the GHMP kinase family. IspE subfamily.

It catalyses the reaction 4-CDP-2-C-methyl-D-erythritol + ATP = 4-CDP-2-C-methyl-D-erythritol 2-phosphate + ADP + H(+). Its pathway is isoprenoid biosynthesis; isopentenyl diphosphate biosynthesis via DXP pathway; isopentenyl diphosphate from 1-deoxy-D-xylulose 5-phosphate: step 3/6. Catalyzes the phosphorylation of the position 2 hydroxy group of 4-diphosphocytidyl-2C-methyl-D-erythritol. This chain is 4-diphosphocytidyl-2-C-methyl-D-erythritol kinase, found in Lawsonia intracellularis (strain PHE/MN1-00).